The chain runs to 312 residues: Glyoxylate/hydroxypyruvate reductase A (312 aa).

R227 is an active-site residue. The active-site Proton donor is the H275.

The protein belongs to the D-isomer specific 2-hydroxyacid dehydrogenase family. GhrA subfamily.

It localises to the cytoplasm. It catalyses the reaction glycolate + NADP(+) = glyoxylate + NADPH + H(+). The catalysed reaction is (R)-glycerate + NAD(+) = 3-hydroxypyruvate + NADH + H(+). The enzyme catalyses (R)-glycerate + NADP(+) = 3-hydroxypyruvate + NADPH + H(+). Its function is as follows. Catalyzes the NADPH-dependent reduction of glyoxylate and hydroxypyruvate into glycolate and glycerate, respectively. The polypeptide is Glyoxylate/hydroxypyruvate reductase A (Escherichia coli O17:K52:H18 (strain UMN026 / ExPEC)).